A 146-amino-acid polypeptide reads, in one-letter code: Hemoglobin subunit beta (146 aa).

Positions 2–146 (HWTAEEKQLI…VAHALARKYH (145 aa)) constitute a Globin domain. Heme b contacts are provided by histidine 63 and histidine 92.

This sequence belongs to the globin family. Heterotetramer of two alpha chains and two beta chains. As to expression, red blood cells.

In terms of biological role, involved in oxygen transport from the lung to the various peripheral tissues. This is Hemoglobin subunit beta (HBB) from Ara ararauna (Blue-and-yellow macaw).